Here is a 112-residue protein sequence, read N- to C-terminus: Large ribosomal subunit protein uL22 (112 aa).

Belongs to the universal ribosomal protein uL22 family. As to quaternary structure, part of the 50S ribosomal subunit.

Functionally, this protein binds specifically to 23S rRNA; its binding is stimulated by other ribosomal proteins, e.g. L4, L17, and L20. It is important during the early stages of 50S assembly. It makes multiple contacts with different domains of the 23S rRNA in the assembled 50S subunit and ribosome. The globular domain of the protein is located near the polypeptide exit tunnel on the outside of the subunit, while an extended beta-hairpin is found that lines the wall of the exit tunnel in the center of the 70S ribosome. In Moorella thermoacetica (strain ATCC 39073 / JCM 9320), this protein is Large ribosomal subunit protein uL22.